The sequence spans 179 residues: MRKNFALIGPRGVGKSKISRKLSKITGMPVVSTDMIAVYEMGGISIPEFIQENEGDWKTFRDLEFQILVKLKTSRGIILDCGGGILFDLDTKGKEVPSSRKIDLLKSIAVVFGLSKPTEILVEKIQNDPTRPPLSAINSYRSIVENRLPHYRSVSDYYLEIDDLKVEEVCSRILHKIEY.

Glycine 12–lysine 17 lines the ATP pocket. Serine 16 serves as a coordination point for Mg(2+). Substrate is bound by residues aspartate 34, arginine 61, and glycine 83. Arginine 131 contacts ATP. Residue arginine 147 coordinates substrate.

This sequence belongs to the shikimate kinase family. In terms of assembly, monomer. Requires Mg(2+) as cofactor.

It is found in the cytoplasm. It catalyses the reaction shikimate + ATP = 3-phosphoshikimate + ADP + H(+). It participates in metabolic intermediate biosynthesis; chorismate biosynthesis; chorismate from D-erythrose 4-phosphate and phosphoenolpyruvate: step 5/7. Catalyzes the specific phosphorylation of the 3-hydroxyl group of shikimic acid using ATP as a cosubstrate. This is Shikimate kinase from Leptospira borgpetersenii serovar Hardjo-bovis (strain JB197).